Reading from the N-terminus, the 210-residue chain is Outer-membrane lipoprotein LolB (210 aa).

Positions 1-29 (MSLISNNEERSLRVRYCIAIALSALLISG) are cleaved as a signal peptide. Residue Cys-30 is the site of N-palmitoyl cysteine attachment. Cys-30 carries S-diacylglycerol cysteine lipidation.

It belongs to the LolB family. Monomer.

Its subcellular location is the cell outer membrane. In terms of biological role, plays a critical role in the incorporation of lipoproteins in the outer membrane after they are released by the LolA protein. The sequence is that of Outer-membrane lipoprotein LolB from Coxiella burnetii (strain CbuK_Q154) (Coxiella burnetii (strain Q154)).